The chain runs to 120 residues: UPF0102 protein PTH_1707 (120 aa).

This sequence belongs to the UPF0102 family.

The chain is UPF0102 protein PTH_1707 from Pelotomaculum thermopropionicum (strain DSM 13744 / JCM 10971 / SI).